The chain runs to 541 residues: Reticulophagy regulator 2 (541 aa).

3 helical membrane-spanning segments follow: residues 75-91, 99-115, and 199-219; these read LHSL…FWLL, FFLL…LDLW, and VPGI…PLVV. Residues 249-282 are disordered; sequence LHHKHDKRKRQGKNAPPAGDEPLAETESESEAEL. The segment covering 250 to 260 has biased composition (basic residues); it reads HHKHDKRKRQG. Residues 270 to 280 show a composition bias toward acidic residues; it reads PLAETESESEA. A Phosphothreonine modification is found at Thr274. 4 positions are modified to phosphoserine: Ser276, Ser278, Ser286, and Ser306. Thr329 is modified (phosphothreonine). Disordered regions lie at residues 331-389, 403-440, and 459-481; these read VSED…ADKE, THFN…APSS, and PSVL…EEEA. Ser332, Ser339, and Ser342 each carry phosphoserine. Positions 459–475 are enriched in low complexity; sequence PSVLPSLPQDSPQALTA. The short motif at 485–490 is the LIR motif element; sequence EDFELL. The tract at residues 496 to 541 is disordered; the sequence is EQLNAELGLGPEMPPKPPDVLPPPPLGPDSHSLVQSDQEAHAVVEP. Positions 507 to 522 are enriched in pro residues; it reads EMPPKPPDVLPPPPLG.

The protein belongs to the RETREG family. As to quaternary structure, interacts with ATG8 family modifier proteins MAP1LC3A, MAP1LC3B, GABARAP, GABARAPL1 and GABARAPL2. Interacts with CANX.

The protein localises to the endoplasmic reticulum membrane. Functionally, endoplasmic reticulum (ER)-anchored autophagy regulator which exists in an inactive state under basal conditions but is activated following cellular stress. When activated, induces ER fragmentation and mediates ER delivery into lysosomes through sequestration into autophagosomes via interaction with ATG8 family proteins. Required for collagen quality control in a LIR motif-independent manner. The chain is Reticulophagy regulator 2 (Retreg2) from Rattus norvegicus (Rat).